The sequence spans 234 residues: uncharacterized protein (234 aa).

Over residues M1–S12 the composition is skewed to low complexity. The disordered stretch occupies residues M1–R184. Composition is skewed to polar residues over residues T21–S40 and K52–P64. Over residues K66–S77 the composition is skewed to low complexity. A compositionally biased stretch (polar residues) spans G105 to S120. Over residues L152–S167 the composition is skewed to basic and acidic residues.

As to quaternary structure, interacts with RLK902. As to expression, expressed in stems, rosette leaves and roots and weakly in inflorescences.

This is an uncharacterized protein from Arabidopsis thaliana (Mouse-ear cress).